Here is a 33-residue protein sequence, read N- to C-terminus: Large ribosomal subunit protein eL21 (33 aa).

The protein belongs to the eukaryotic ribosomal protein eL21 family. As to quaternary structure, component of the large ribosomal subunit.

It localises to the cytoplasm. The protein resides in the cytosol. It is found in the endoplasmic reticulum. Component of the large ribosomal subunit. The ribosome is a large ribonucleoprotein complex responsible for the synthesis of proteins in the cell. This is Large ribosomal subunit protein eL21 (rpl21) from Xenopus laevis (African clawed frog).